We begin with the raw amino-acid sequence, 560 residues long: Protein NRT1/ PTR FAMILY 2.5 (560 aa).

The interval 1–20 (MADSKSGDTEVAHRSSDPSE) is disordered. Helical transmembrane passes span 34–54 (TLLG…VFLI), 77–97 (MLPV…PVIS), 101–121 (FISL…YLMP), 141–161 (ILYV…FTLA), 177–197 (FFNW…TAIV), 207–227 (LGFG…IAGV), 323–343 (AILR…PVAV), 372–392 (VIVL…IYPM), 404–424 (LQQV…SAVV), 441–461 (VLWL…HFPA), 480–500 (SLTS…IDVI), and 520–540 (YWVV…CSWF).

It belongs to the major facilitator superfamily. Proton-dependent oligopeptide transporter (POT/PTR) (TC 2.A.17) family. Expressed in the root epidermis or cortex.

It localises to the membrane. Transporter involved in a passive nitrate efflux. This Arabidopsis thaliana (Mouse-ear cress) protein is Protein NRT1/ PTR FAMILY 2.5 (NPF2.5).